Consider the following 113-residue polypeptide: UPF0122 protein MGAS10270_Spy1030 (113 aa).

It belongs to the UPF0122 family.

Its function is as follows. Might take part in the signal recognition particle (SRP) pathway. This is inferred from the conservation of its genetic proximity to ftsY/ffh. May be a regulatory protein. The protein is UPF0122 protein MGAS10270_Spy1030 of Streptococcus pyogenes serotype M2 (strain MGAS10270).